The primary structure comprises 157 residues: Protein Smg homolog (157 aa).

It belongs to the Smg family.

The sequence is that of Protein Smg homolog from Shewanella pealeana (strain ATCC 700345 / ANG-SQ1).